Reading from the N-terminus, the 361-residue chain is Septin-2 (361 aa).

Tyrosine 17 carries the post-translational modification Phosphotyrosine. A Septin-type G domain is found at 34–306 (KGFEFTLMVV…ENFRSERLKR (273 aa)). The segment at 44–51 (GESGLGKS) is G1 motif. GTP is bound by residues 44–51 (GESGLGKS), threonine 78, glycine 104, and 183–191 (KADTLTLKE). Positions 101 to 104 (DTPG) are G3 motif. Residues 182–185 (AKAD) form a G4 motif region. Residue lysine 190 is modified to N6-acetyllysine. Tyrosine 211 bears the Phosphotyrosine mark. The residue at position 218 (serine 218) is a Phosphoserine. Glycine 241 and arginine 256 together coordinate GTP. The important for dimerization stretch occupies residues 260–270 (WGVVEVENPEH).

It belongs to the TRAFAC class TrmE-Era-EngA-EngB-Septin-like GTPase superfamily. Septin GTPase family. As to quaternary structure, septins polymerize into heterooligomeric protein complexes that form filaments, and associate with cellular membranes, actin filaments and microtubules. GTPase activity is required for filament formation. Filaments are assembled from asymmetrical heterotrimers, composed of SEPTIN2, SEPTIN6 and SEPTIN7 that associate head-to-head to form a hexameric unit. Interaction between SEPTIN2 and SEPTIN7 seems indirect. Interacts with SEPTIN5. Interaction with SEPTIN4 not detected. Interacts with SEPTIN9. Component of a septin core octameric complex consisting of SEPTIN12, SEPTIN7, SEPTIN6 and SEPTIN2 or SEPTIN4 in the order 12-7-6-2-2-6-7-12 or 12-7-6-4-4-6-7-12 and located in the sperm annulus. Interacts with MAP4. Interacts with DZIP1L.

It is found in the cytoplasm. The protein localises to the cytoskeleton. The protein resides in the spindle. Its subcellular location is the chromosome. It localises to the centromere. It is found in the kinetochore. The protein localises to the cleavage furrow. The protein resides in the midbody. Its subcellular location is the cell cortex. It localises to the cell projection. It is found in the cilium membrane. The protein localises to the cilium. The protein resides in the flagellum. Filament-forming cytoskeletal GTPase. Forms a filamentous structure with SEPTIN12, SEPTIN6, SEPTIN2 and probably SEPTIN4 at the sperm annulus which is required for the structural integrity and motility of the sperm tail during postmeiotic differentiation. Required for normal organization of the actin cytoskeleton. Plays a role in the biogenesis of polarized columnar-shaped epithelium by maintaining polyglutamylated microtubules, thus facilitating efficient vesicle transport, and by impeding MAP4 binding to tubulin. Required for the progression through mitosis. Forms a scaffold at the midplane of the mitotic splindle required to maintain CENPE localization at kinetochores and consequently chromosome congression. During anaphase, may be required for chromosome segregation and spindle elongation. Plays a role in ciliogenesis and collective cell movements. In cilia, required for the integrity of the diffusion barrier at the base of the primary cilium that prevents diffusion of transmembrane proteins between the cilia and plasma membranes: probably acts by regulating the assembly of the tectonic-like complex (also named B9 complex) by localizing TMEM231 protein. This is Septin-2 from Bos taurus (Bovine).